The following is a 282-amino-acid chain: U1 small nuclear ribonucleoprotein A (282 aa).

Residue Ala-2 is modified to N-acetylalanine. The RRM 1 domain occupies 10–89 (HTIYINNLNE…KPMRIQYAKT (80 aa)). The residue at position 60 (Lys-60) is an N6-acetyllysine. The disordered stretch occupies residues 100–132 (TFVERDRKREKRKPKSQETPATKKAVQGGGATP). Thr-131 carries the post-translational modification Phosphothreonine. Position 152 is an omega-N-methylarginine (Arg-152). An RRM 2 domain is found at 208–282 (HILFLTNLPE…NAMKISFAKK (75 aa)).

The protein belongs to the RRM U1 A/B'' family. In terms of assembly, U1 snRNP is composed of the 7 core Sm proteins SNRPB, SNRPD1, SNRPD2, SNRPD3, SNRPE, SNRPF and SNRPG that assemble in a heptameric protein ring on the Sm site of the small nuclear RNA to form the core snRNP, and at least three U1 snRNP-specific proteins SNRNP70/U1-70K, SNRPA/U1-A and SNRPC/U1-C. Interacts with SFPQ; component of a snRNP-free complex with SFPQ. Interacts with IVNS1ABP (via BACK domain); the interaction is indirect.

It is found in the nucleus. Its function is as follows. Component of the spliceosomal U1 snRNP, which is essential for recognition of the pre-mRNA 5' splice-site and the subsequent assembly of the spliceosome. U1 snRNP is the first snRNP to interact with pre-mRNA. This interaction is required for the subsequent binding of U2 snRNP and the U4/U6/U5 tri-snRNP. SNRPA binds stem loop II of U1 snRNA. In a snRNP-free form (SF-A) may be involved in coupled pre-mRNA splicing and polyadenylation process. May bind preferentially to the 5'-UGCAC-3' motif on RNAs. This Homo sapiens (Human) protein is U1 small nuclear ribonucleoprotein A (SNRPA).